The primary structure comprises 60 residues: Large ribosomal subunit protein bL33 (60 aa).

It belongs to the bacterial ribosomal protein bL33 family.

The sequence is that of Large ribosomal subunit protein bL33 from Chlorobium phaeobacteroides (strain DSM 266 / SMG 266 / 2430).